A 263-amino-acid chain; its full sequence is Copper homeostasis protein cutC homolog (263 aa).

This sequence belongs to the CutC family.

Functionally, involved in copper homeostasis. The chain is Copper homeostasis protein cutC homolog from Drosophila melanogaster (Fruit fly).